A 381-amino-acid chain; its full sequence is Probable G-protein coupled receptor 34 (381 aa).

At Met-1–Tyr-61 the chain is on the extracellular side. Residues Asn-28, Asn-36, and Asn-42 are each glycosylated (N-linked (GlcNAc...) asparagine). A helical transmembrane segment spans residues Ser-62–Ile-82. Topologically, residues His-83–Ser-88 are cytoplasmic. Residues Ile-89–Phe-109 traverse the membrane as a helical segment. The Extracellular portion of the chain corresponds to Arg-110 to Lys-128. Cys-127 and Cys-204 are joined by a disulfide. A helical transmembrane segment spans residues Val-129–Ser-149. Residues Leu-150–Ser-171 lie on the Cytoplasmic side of the membrane. The helical transmembrane segment at Ile-172–Leu-192 threads the bilayer. At Thr-193–Glu-216 the chain is on the extracellular side. Asn-200 carries an N-linked (GlcNAc...) asparagine glycan. Residues Ala-217–Ser-237 form a helical membrane-spanning segment. Topologically, residues Tyr-238–Phe-269 are cytoplasmic. The chain crosses the membrane as a helical span at residues Ile-270–Ile-290. At Ser-291–Glu-310 the chain is on the extracellular side. N-linked (GlcNAc...) asparagine glycosylation occurs at Asn-295. A helical membrane pass occupies residues Ile-311–Ser-331. Over Ser-332–Thr-381 the chain is Cytoplasmic.

It belongs to the G-protein coupled receptor 1 family.

Its subcellular location is the cell membrane. Functionally, G-protein-coupled receptor of lysophosphatidylserine (LysoPS) that plays different roles in immune response. Acts a damage-sensing receptor that triggers tissue repair upon recognition of dying neutrophils. Mechanistically, apoptotic neutrophils release lysophosphatydilserine that are recognized by type 3 innate lymphoid cells (ILC3s) via GPR34, which activates downstream PI3K-AKT and RAS-ERK signaling pathways leading to STAT3 activation and IL-22 production. Plays an important role in microglial function, controlling morphology and phagocytosis. This chain is Probable G-protein coupled receptor 34 (GPR34), found in Gorilla gorilla gorilla (Western lowland gorilla).